A 539-amino-acid polypeptide reads, in one-letter code: CTP synthase (539 aa).

Residues 1–268 (MSFKCIFLTG…STFITEKLGL (268 aa)) form an amidoligase domain region. S14 contributes to the CTP binding site. S14 lines the UTP pocket. 15 to 20 (SLGKGL) is a binding site for ATP. Y55 contributes to the L-glutamine binding site. D72 contacts ATP. Residues D72 and E142 each contribute to the Mg(2+) site. CTP-binding positions include 149–151 (DIE), 188–193 (KTKPTQ), and K224. UTP is bound by residues 188 to 193 (KTKPTQ) and K224. In terms of domain architecture, Glutamine amidotransferase type-1 spans 294 to 533 (RIGLVGKYVQ…IQAAILYSRN (240 aa)). G353 is a binding site for L-glutamine. C380 serves as the catalytic Nucleophile; for glutamine hydrolysis. L-glutamine contacts are provided by residues 381–384 (LGMQ), E404, and R461. Active-site residues include H506 and E508.

Belongs to the CTP synthase family. Homotetramer.

The catalysed reaction is UTP + L-glutamine + ATP + H2O = CTP + L-glutamate + ADP + phosphate + 2 H(+). The enzyme catalyses L-glutamine + H2O = L-glutamate + NH4(+). It carries out the reaction UTP + NH4(+) + ATP = CTP + ADP + phosphate + 2 H(+). It participates in pyrimidine metabolism; CTP biosynthesis via de novo pathway; CTP from UDP: step 2/2. With respect to regulation, allosterically activated by GTP, when glutamine is the substrate; GTP has no effect on the reaction when ammonia is the substrate. The allosteric effector GTP functions by stabilizing the protein conformation that binds the tetrahedral intermediate(s) formed during glutamine hydrolysis. Inhibited by the product CTP, via allosteric rather than competitive inhibition. Its function is as follows. Catalyzes the ATP-dependent amination of UTP to CTP with either L-glutamine or ammonia as the source of nitrogen. Regulates intracellular CTP levels through interactions with the four ribonucleotide triphosphates. This chain is CTP synthase, found in Chlamydia felis (strain Fe/C-56) (Chlamydophila felis).